The chain runs to 78 residues: Large ribosomal subunit protein bL28 (78 aa).

The interval 1 to 21 (MSRVCQVTGKRPMSGNNRSHA) is disordered.

The protein belongs to the bacterial ribosomal protein bL28 family.

The protein is Large ribosomal subunit protein bL28 of Photorhabdus laumondii subsp. laumondii (strain DSM 15139 / CIP 105565 / TT01) (Photorhabdus luminescens subsp. laumondii).